The following is a 279-amino-acid chain: Four and a half LIM domains protein 2 (279 aa).

Residues 7-31 (CHHCNESLFGKKYILREESPYCVVC) form a C4-type zinc finger. LIM zinc-binding domains are found at residues 40–92 (CEEC…CTDC), 101–153 (CQEC…CVPC), and 162–212 (CVQC…CLNC). A Glycyl lysine isopeptide (Lys-Gly) (interchain with G-Cter in SUMO2) cross-link involves residue Lys-78. Residues Lys-167 and Lys-220 each participate in a glycyl lysine isopeptide (Lys-Gly) (interchain with G-Cter in SUMO2) cross-link. Residues 221 to 275 (CAGCTNPISGLGGTKYISFEERQWHNDCFNCKKCSLSLVGRGFLTERDDILCPDC) enclose the LIM zinc-binding 4 domain. A Phosphoserine modification is found at Ser-238.

Interacts with ZNF638 and TTN/titin. Interacts with E4F1. Interacts with GRB7. Interacts with SIRT1 and FOXO1. Interacts with CEFIP. Interacts with calcineurin. Interacts with FOXK1. Expressed in skeletal muscle and heart.

The protein localises to the cytoplasm. The protein resides in the nucleus. It is found in the myofibril. Its subcellular location is the sarcomere. It localises to the z line. May function as a molecular transmitter linking various signaling pathways to transcriptional regulation. Negatively regulates the transcriptional repressor E4F1 and may function in cell growth. Inhibits the transcriptional activity of FOXO1 and its apoptotic function by enhancing the interaction of FOXO1 with SIRT1 and FOXO1 deacetylation. Negatively regulates the calcineurin/NFAT signaling pathway in cardiomyocytes. This Homo sapiens (Human) protein is Four and a half LIM domains protein 2 (FHL2).